A 492-amino-acid polypeptide reads, in one-letter code: Glutamyl-tRNA(Gln) amidotransferase subunit A (492 aa).

Residues K81 and S156 each act as charge relay system in the active site. S180 (acyl-ester intermediate) is an active-site residue.

This sequence belongs to the amidase family. GatA subfamily. In terms of assembly, heterotrimer of A, B and C subunits.

The catalysed reaction is L-glutamyl-tRNA(Gln) + L-glutamine + ATP + H2O = L-glutaminyl-tRNA(Gln) + L-glutamate + ADP + phosphate + H(+). Functionally, allows the formation of correctly charged Gln-tRNA(Gln) through the transamidation of misacylated Glu-tRNA(Gln) in organisms which lack glutaminyl-tRNA synthetase. The reaction takes place in the presence of glutamine and ATP through an activated gamma-phospho-Glu-tRNA(Gln). This Rhodococcus erythropolis (strain PR4 / NBRC 100887) protein is Glutamyl-tRNA(Gln) amidotransferase subunit A.